The sequence spans 501 residues: Lysine--tRNA ligase (501 aa).

The Mg(2+) site is built by Glu404 and Glu411.

This sequence belongs to the class-II aminoacyl-tRNA synthetase family. As to quaternary structure, homodimer. Mg(2+) serves as cofactor.

It is found in the cytoplasm. It carries out the reaction tRNA(Lys) + L-lysine + ATP = L-lysyl-tRNA(Lys) + AMP + diphosphate. The sequence is that of Lysine--tRNA ligase (lysS) from Campylobacter jejuni subsp. jejuni serotype O:2 (strain ATCC 700819 / NCTC 11168).